The sequence spans 358 residues: Type II restriction enzyme SacI (358 aa).

It catalyses the reaction Endonucleolytic cleavage of DNA to give specific double-stranded fragments with terminal 5'-phosphates.. Functionally, a subtype P restriction enzyme that recognizes the double-stranded sequence 5'-GAGCTC-3' and cleaves after T-5. The chain is Type II restriction enzyme SacI from Streptomyces achromogenes.